The following is a 1585-amino-acid chain: Maestro heat-like repeat-containing protein family member 2B (1585 aa).

HEAT repeat units follow at residues 28-65 (VNKE…DMRD), 228-263 (GYAL…AAVL), 272-309 (LRRS…LAHS), 310-346 (NPGE…ADEP), 405-445 (TLNR…LVIG), 531-569 (IGLL…STVL), 572-611 (TMLL…NSTE), 662-699 (ENHL…LTKT), 777-819 (SYKE…LKPQ), 964-1001 (HLEV…KFIP), 1021-1059 (PTCT…HMPV), 1112-1151 (ASSG…VISM), 1157-1195 (GLYP…QGEQ), 1258-1295 (GVIL…EPIL), and 1363-1402 (CESL…EQDD).

Found in a complex at least composed of MROH2B, PRKACA isoform 2 and TCP11. Interacts with PRKACA. Interacts with TCP11. Post-translationally, constitutively phosphorylated on serine and threonine residues in acrosomal region of the sperm head, midpiece and flagellar regions of noncapacitated spermatozoa. Phosphorylation on tyrosine residues increases upon sperm capacitation within the acrosomal and tail regions in a protein kinase A (PKA)-dependent signaling pathway.

Its subcellular location is the cytoplasm. It localises to the cytoplasmic vesicle. The protein resides in the secretory vesicle. The protein localises to the acrosome. It is found in the cell projection. Its subcellular location is the cilium. It localises to the flagellum. May play a role in the process of sperm capacitation. The polypeptide is Maestro heat-like repeat-containing protein family member 2B (Homo sapiens (Human)).